Consider the following 198-residue polypeptide: Methyl-coenzyme M reductase I operon protein C (198 aa).

In terms of assembly, MCR is composed of three subunits: alpha, beta, and gamma. The function of proteins C and D is not known.

The protein is Methyl-coenzyme M reductase I operon protein C (mcrC) of Methanothermobacter marburgensis (strain ATCC BAA-927 / DSM 2133 / JCM 14651 / NBRC 100331 / OCM 82 / Marburg) (Methanobacterium thermoautotrophicum).